The chain runs to 499 residues: Phenylalanine--tRNA ligase alpha subunit (499 aa).

L-phenylalanine-binding positions include threonine 342, 381–383 (QID), and phenylalanine 422. Glutamate 424 is a binding site for Mg(2+). Phenylalanine 447 is a binding site for L-phenylalanine.

The protein belongs to the class-II aminoacyl-tRNA synthetase family. Phe-tRNA synthetase alpha subunit type 2 subfamily. Tetramer of two alpha and two beta subunits. Requires Mg(2+) as cofactor.

The protein localises to the cytoplasm. The enzyme catalyses tRNA(Phe) + L-phenylalanine + ATP = L-phenylalanyl-tRNA(Phe) + AMP + diphosphate + H(+). This is Phenylalanine--tRNA ligase alpha subunit from Thermococcus gammatolerans (strain DSM 15229 / JCM 11827 / EJ3).